A 95-amino-acid polypeptide reads, in one-letter code: uncharacterized protein (95 aa).

This is an uncharacterized protein from Bacillus anthracis.